Consider the following 275-residue polypeptide: Large ribosomal subunit protein uL2 (275 aa).

Positions V223–S260 are disordered.

The protein belongs to the universal ribosomal protein uL2 family. Part of the 50S ribosomal subunit. Forms a bridge to the 30S subunit in the 70S ribosome.

In terms of biological role, one of the primary rRNA binding proteins. Required for association of the 30S and 50S subunits to form the 70S ribosome, for tRNA binding and peptide bond formation. It has been suggested to have peptidyltransferase activity; this is somewhat controversial. Makes several contacts with the 16S rRNA in the 70S ribosome. The protein is Large ribosomal subunit protein uL2 of Legionella pneumophila (strain Paris).